The sequence spans 271 residues: Expansin-B1 (271 aa).

Residues 1–24 form the signal peptide; the sequence is MQLFPVILPTLCVFLHLLISGSGS. The region spanning 58–169 is the Expansin-like EG45 domain; it reads GGACGYGSLV…RRTACKYRGK (112 aa). Intrachain disulfides connect Cys61/Cys90, Cys93/Cys164, and Cys98/Cys104. One can recognise an Expansin-like CBD domain in the interval 182–263; the sequence is YWLSLLIEYE…NWVPKATYTS (82 aa). Asn242 carries an N-linked (GlcNAc...) asparagine glycan.

It belongs to the expansin family. Expansin B subfamily.

Its subcellular location is the secreted. It localises to the cell wall. The protein resides in the membrane. In terms of biological role, may cause loosening and extension of plant cell walls by disrupting non-covalent bonding between cellulose microfibrils and matrix glucans. No enzymatic activity has been found. This chain is Expansin-B1 (EXPB1), found in Arabidopsis thaliana (Mouse-ear cress).